The primary structure comprises 703 residues: Protein O-mannosyl-transferase TMEM260 (703 aa).

Transmembrane regions (helical) follow at residues 20-40 (GALR…TLTL), 68-88 (PLFT…SVAY), 90-110 (VNLL…YTVF), 137-157 (IAAE…ALTV), 182-202 (SLCN…WILF), 218-238 (LTLA…SSYL), 314-334 (KSSV…FFAW), and 352-372 (FWLQ…ATLV). N403 and N564 each carry an N-linked (GlcNAc...) asparagine glycan.

This sequence belongs to the glycosyltransferase 117 (GT117) family.

The protein resides in the endoplasmic reticulum membrane. It catalyses the reaction a di-trans,poly-cis-dolichyl beta-D-mannosyl phosphate + L-seryl-[protein] = 3-O-(alpha-D-mannosyl)-L-seryl-[protein] + a di-trans,poly-cis-dolichyl phosphate + H(+). The enzyme catalyses a di-trans,poly-cis-dolichyl beta-D-mannosyl phosphate + L-threonyl-[protein] = 3-O-(alpha-D-mannosyl)-L-threonyl-[protein] + a di-trans,poly-cis-dolichyl phosphate + H(+). Functionally, O-mannosyl-transferase that transfers mannosyl residues to the hydroxyl group of serine or threonine residues of proteins. Specifically glycosylates the IPT/TIG domain of target proteins, such as MET and MST1R/RON. TMEM260-mediated O-mannosylated residues are composed of single mannose glycans that are not elongated or modified. This Mus musculus (Mouse) protein is Protein O-mannosyl-transferase TMEM260.